The primary structure comprises 198 residues: Dephospho-CoA kinase (198 aa).

The region spanning Ile3–Ala198 is the DPCK domain. Gly11–Thr16 is a binding site for ATP.

This sequence belongs to the CoaE family.

The protein resides in the cytoplasm. The catalysed reaction is 3'-dephospho-CoA + ATP = ADP + CoA + H(+). It participates in cofactor biosynthesis; coenzyme A biosynthesis; CoA from (R)-pantothenate: step 5/5. Functionally, catalyzes the phosphorylation of the 3'-hydroxyl group of dephosphocoenzyme A to form coenzyme A. In Dehalococcoides mccartyi (strain ATCC BAA-2266 / KCTC 15142 / 195) (Dehalococcoides ethenogenes (strain 195)), this protein is Dephospho-CoA kinase.